The sequence spans 454 residues: Ribosomal protein uS12 methylthiotransferase RimO (454 aa).

The MTTase N-terminal domain maps to 14 to 125 (SKIAFSHVGC…IAKVLDRVEK (112 aa)). [4Fe-4S] cluster-binding residues include C23, C59, C88, C163, C167, and C170. Residues 149-378 (DKNKFVAYLR…ISVQQNISRE (230 aa)) form the Radical SAM core domain. Residues 381–452 (QIYVGSKMKI…EYDLYGETIK (72 aa)) enclose the TRAM domain.

Belongs to the methylthiotransferase family. RimO subfamily. The cofactor is [4Fe-4S] cluster.

The protein resides in the cytoplasm. The catalysed reaction is L-aspartate(89)-[ribosomal protein uS12]-hydrogen + (sulfur carrier)-SH + AH2 + 2 S-adenosyl-L-methionine = 3-methylsulfanyl-L-aspartate(89)-[ribosomal protein uS12]-hydrogen + (sulfur carrier)-H + 5'-deoxyadenosine + L-methionine + A + S-adenosyl-L-homocysteine + 2 H(+). Its function is as follows. Catalyzes the methylthiolation of an aspartic acid residue of ribosomal protein uS12. The polypeptide is Ribosomal protein uS12 methylthiotransferase RimO (Prochlorococcus marinus (strain MIT 9301)).